The chain runs to 491 residues: 3-epi-6-deoxocathasterone 23-monooxygenase CYP90D1 (491 aa).

A helical membrane pass occupies residues 7-27; the sequence is LLFFSFFFFIIIVIFNKINGL. Residue Cys442 participates in heme binding.

The protein belongs to the cytochrome P450 family. Heme serves as cofactor. In terms of tissue distribution, expressed in leaf vascular tissue.

Its subcellular location is the endoplasmic reticulum membrane. The catalysed reaction is 3-epi-6-deoxocathasterone + reduced [NADPH--hemoprotein reductase] + O2 = 6-deoxotyphasterol + oxidized [NADPH--hemoprotein reductase] + H2O + H(+). The enzyme catalyses (22S,24R)-22-hydroxy-5alpha-ergostan-3-one + reduced [NADPH--hemoprotein reductase] + O2 = 3-dehydro-6-deoxoteasterone + oxidized [NADPH--hemoprotein reductase] + H2O + H(+). It participates in plant hormone biosynthesis; brassinosteroid biosynthesis. Its function is as follows. Involved in brassinosteroid (BR) biosynthesis. May convert teasterone (TE) to 3-dehydroteasterone (3DT, 3-DHT), or 6-deoxoteasterone (6-deoxoTE) to 3-dehydro-6-deoxoteasterone (6-deoxo3DT, 6-deoxo3DHT). C-23 hydroxylase that converts directly (22S,24R)-22-hydroxy-5-alpha-ergostan-3-one and 3-epi-6-deoxocathasterone to 3-dehydro-6-deoxoteasterone (6-deoxo3DT, 6-deoxo3DHT) and 6-deoxotyphasterol (6-deoxoTY), respectively. These C-23 hydroxylation shortcuts bypass campestanol, 6-deoxocathasterone, and 6-deoxoteasterone (6-deoxoTE). Also catalyzes the conversion of cathasterone to teasterone (TE), 6-deoxotyphasterol (6-deoxoTY) to 6-deoxocathasterone (6-deoxoCT), (22S,24R)-22-hydroxyergost-4-en-3-one (22-OH-4-en-3-one) to (22R,23R)-22,23-dihydroxy-campest-4-en-3-one (22,23-diOH-4-en-3-one) and (22S)-22-hydroxycampesterol (22-OHCR) to (22R,23R)-22,23-dihydroxycampesterol (22,23-diOHCR). This is 3-epi-6-deoxocathasterone 23-monooxygenase CYP90D1 from Arabidopsis thaliana (Mouse-ear cress).